The sequence spans 312 residues: tRNA-dihydrouridine(16) synthase (312 aa).

Residues 7–9 (PMQ) and Q68 contribute to the FMN site. The active-site Proton donor is C98. Residues K139, 200 to 202 (NGE), and 224 to 225 (GR) each bind FMN.

Belongs to the Dus family. DusC subfamily. FMN is required as a cofactor.

It carries out the reaction 5,6-dihydrouridine(16) in tRNA + NADP(+) = uridine(16) in tRNA + NADPH + H(+). The enzyme catalyses 5,6-dihydrouridine(16) in tRNA + NAD(+) = uridine(16) in tRNA + NADH + H(+). Its function is as follows. Catalyzes the synthesis of 5,6-dihydrouridine (D), a modified base found in the D-loop of most tRNAs, via the reduction of the C5-C6 double bond in target uridines. Specifically modifies U16 in tRNAs. The protein is tRNA-dihydrouridine(16) synthase of Pasteurella multocida (strain Pm70).